Here is a 214-residue protein sequence, read N- to C-terminus: Large ribosomal subunit protein uL16-like (214 aa).

Belongs to the universal ribosomal protein uL16 family. As to quaternary structure, component of the 60S large ribosomal subunit (LSU).

It is found in the cytoplasm. Its function is as follows. Testis-specific component of the ribosome, which is required for the transition from prophase to metaphase in male meiosis I. Compensates for the inactivated X-linked RPL10 paralog during spermatogenesis. The ribosome is a large ribonucleoprotein complex responsible for the synthesis of proteins in the cell. The small ribosomal subunit (SSU) binds messenger RNAs (mRNAs) and translates the encoded message by selecting cognate aminoacyl-transfer RNA (tRNA) molecules. The large subunit (LSU) contains the ribosomal catalytic site termed the peptidyl transferase center (PTC), which catalyzes the formation of peptide bonds, thereby polymerizing the amino acids delivered by tRNAs into a polypeptide chain. The nascent polypeptides leave the ribosome through a tunnel in the LSU and interact with protein factors that function in enzymatic processing, targeting, and the membrane insertion of nascent chains at the exit of the ribosomal tunnel. The protein is Large ribosomal subunit protein uL16-like (RPL10L) of Macaca fascicularis (Crab-eating macaque).